A 485-amino-acid chain; its full sequence is Pentatricopeptide repeat-containing protein At1g62720 (485 aa).

PPR repeat units lie at residues 68–102 (SIVD…GIGH), 103–137 (DLYS…GYEP), 138–172 (DVVT…GFRP), 173–207 (DVVI…GVRA), 208–242 (DAVT…DIVP), 243–277 (NVIT…CVDP), 278–312 (DVFT…GCLP), 313–347 (DVVT…GLVG), 348–378 (DTIT…MDSR), 380–414 (NIRT…EIEL), 415–449 (DITT…GLKP), and 450–484 (DVVS…GLLP).

The protein belongs to the PPR family. P subfamily.

The chain is Pentatricopeptide repeat-containing protein At1g62720 from Arabidopsis thaliana (Mouse-ear cress).